A 505-amino-acid polypeptide reads, in one-letter code: ATP-dependent RNA helicase HAS1 (505 aa).

The tract at residues 1-37 is disordered; sequence MATPSNKRSRDSESTEEPVVDEKSTSKQNNAAPEGEQ. Phosphoserine is present on serine 12. Residues 26–37 show a composition bias toward polar residues; the sequence is SKQNNAAPEGEQ. The Q motif motif lies at 42–70; the sequence is EKFEELKLSQPTLKAIEKMGFTTMTSVQA. A Helicase ATP-binding domain is found at 73–249; that stretch reads IPPLLAGRDV…RISLRPGPLF (177 aa). 86 to 93 contacts ATP; that stretch reads AKTGSGKT. The short motif at 196-199 is the DEAD box element; sequence DEAD. Residues 263–433 enclose the Helicase C-terminal domain; it reads GLEQGYVVCD…NVQSQLEKLI (171 aa). The Bipartite nuclear localization signal signature appears at 275 to 291; that stretch reads KRFLLLFSFLKRNQKKK.

It belongs to the DEAD box helicase family. DDX18/HAS1 subfamily. In terms of assembly, interacts with RRP1. Associates in the nucleolus with the 60S and pre-60S ribosomal subunits. It has also been isolated with the nuclear pore complex. Post-translationally, phosphorylated by CDK1.

The protein resides in the nucleus. It localises to the nucleolus. The enzyme catalyses ATP + H2O = ADP + phosphate + H(+). ATP-dependent RNA helicase involved in 40S ribosomal subunit biogenesis. Required for the processing and cleavage of 35S pre-rRNA at sites A0, A1, and A2, leading to mature 18S rRNA. The protein is ATP-dependent RNA helicase HAS1 (HAS1) of Saccharomyces cerevisiae (strain ATCC 204508 / S288c) (Baker's yeast).